Consider the following 383-residue polypeptide: MVDDGPKGRQQLKLLLVAARHQLSGQDLRGLVHYLEREDLGFEVTLQVADPTQQPELLELHRLVVTPALIKLQPSPKQVFAGSNILQQLKGWVPRWKQDGVVSGLGLSLRPTELDGSRTQKELQLEDQLLVLRQENETLIDRIHAQERLLRMVAHELRTPLTAAALALQSQRLGQIDMDRFQDVVTRRLEEMEALSKDLLEVGTTRWETLFNPQRLDLASVSAEVILELEKLWLGRNVEIRTDIPSDLPKVFADQRRMRQVLLNLLENALKYTGNGGHIALSMLHRTNQWVEVSVCDSGPGIPNEEQQRIFLDRVRLPQTSDRTTGFGVGLSVCRRIVEVHGGRIWVVSEPEEGACFTFTVPIWQGQGQEWGQAVLTEGQADP.

Residues 152 to 365 (MVAHELRTPL…CFTFTVPIWQ (214 aa)) enclose the Histidine kinase domain. H155 carries the post-translational modification Phosphohistidine; by autocatalysis.

In terms of assembly, homooligomerizes. Interacts with KaiC. Participates in the KaiABC clock complex, whose core is composed of a KaiC homohexamer, 6 KaiB and up to 6 KaiA dimers. SasA and KaiB(fs) compete to bind to KaiC.

The enzyme catalyses ATP + protein L-histidine = ADP + protein N-phospho-L-histidine.. Member of the two-component regulatory system SasA/RpaA involved in genome-wide circadian gene expression. One of several clock output pathways. Participates in the Kai clock protein complex, the main circadian regulator in cyanobacteria, via its interaction with KaiC. KaiC enhances the autophosphorylation activity of SasA, which then transfers its phosphate group to RpaA to activate it. In addition to its output function, recruits fold-shifted KaiB (KaiB(fs)) to KaiC to cooperatively form the KaiB(6):KaiC(6) complex (independent of SasA kinase activity). Required for robustness of the circadian rhythm of gene expression and is involved in clock output, also required for adaptation to light/dark cycles. This is Adaptive-response sensory kinase SasA from Synechococcus sp. (strain CC9902).